The sequence spans 143 residues: Transcriptional regulator MraZ (143 aa).

SpoVT-AbrB domains lie at 5 to 47 and 76 to 119; these read EYQH…PLNE and ATEC…SDER.

This sequence belongs to the MraZ family. In terms of assembly, forms oligomers.

The protein localises to the cytoplasm. The protein resides in the nucleoid. This Enterococcus faecalis (strain ATCC 700802 / V583) protein is Transcriptional regulator MraZ.